We begin with the raw amino-acid sequence, 473 residues long: MSTSLETPSGASAGPSIVASGLPPLADLVRAGSKRTRVVYGAETSAVEDDGLARANKIKLATKLAIEYKDVQTLPPILQAQQTGPAGPKRPTQPSIAASATAGPNVKLIGGPEAEKASSSTPQAVAEPRSLVKFRHQEGFAAEGGQATSRLSQALMRKKEAREVKPEYHPEWKLTRVISGHMGWVRAVAMDPGNQWFATGAGDRVIKIWDLASGELKLSLTGHISTIRGLAVSDRHPYLFSCAEDKMVKCWDLETNKVIRHYHGHFSGVYSLSVHPTLDVLVTGGRDASVRVWDMRTRANIFTLTGHTSTVGDVKTQDSDPQIISGSMDSTVRLWDLAAGKCMNTLTHHKKSVRALAIHPTEYSFASASSGGNNIKKWKCPEGIFVNNFVGHEAIINTLSINSENVLFSGADNGTLTLWDYKTGLPFQHLKDIPQPGSLDAEAGVFCSTFDKTGTRLITGGADKTIKVYSEQA.

Over residues 1-10 (MSTSLETPSG) the composition is skewed to polar residues. Disordered regions lie at residues 1 to 21 (MSTS…VASG) and 103 to 126 (GPNV…QAVA). WD repeat units follow at residues 180–219 (GHMG…LKLS), 222–261 (GHIS…VIRH), 264–303 (GHFS…NIFT), 306–347 (GHTS…NTLT), 349–388 (HKKS…FVNN), 391–429 (GHEA…PFQH), and 440–473 (DAEA…SEQA).

This sequence belongs to the WD repeat PRL1/PRL2 family. Associated with the spliceosome.

Its subcellular location is the cytoplasm. The protein localises to the nucleus. Involved in pre-mRNA splicing and required for cell cycle progression at G2/M. The sequence is that of Pre-mRNA-splicing factor PRP46 (PRP46) from Cryptococcus neoformans var. neoformans serotype D (strain JEC21 / ATCC MYA-565) (Filobasidiella neoformans).